Here is a 421-residue protein sequence, read N- to C-terminus: Serine hydroxymethyltransferase (421 aa).

(6S)-5,6,7,8-tetrahydrofolate is bound by residues Leu-121 and 125–127; that span reads GHL. Lys-229 bears the N6-(pyridoxal phosphate)lysine mark.

Belongs to the SHMT family. As to quaternary structure, homodimer. Pyridoxal 5'-phosphate serves as cofactor.

It localises to the cytoplasm. The enzyme catalyses (6R)-5,10-methylene-5,6,7,8-tetrahydrofolate + glycine + H2O = (6S)-5,6,7,8-tetrahydrofolate + L-serine. Its pathway is one-carbon metabolism; tetrahydrofolate interconversion. The protein operates within amino-acid biosynthesis; glycine biosynthesis; glycine from L-serine: step 1/1. Its function is as follows. Catalyzes the reversible interconversion of serine and glycine with tetrahydrofolate (THF) serving as the one-carbon carrier. This reaction serves as the major source of one-carbon groups required for the biosynthesis of purines, thymidylate, methionine, and other important biomolecules. Also exhibits THF-independent aldolase activity toward beta-hydroxyamino acids, producing glycine and aldehydes, via a retro-aldol mechanism. This Haemophilus influenzae (strain 86-028NP) protein is Serine hydroxymethyltransferase.